The following is a 115-amino-acid chain: NADH-ubiquinone oxidoreductase chain 3 (115 aa).

3 consecutive transmembrane segments (helical) span residues 3–23, 55–75, and 84–104; these read VMLT…IAFW, FFLV…LLPL, and LTTM…SLAY.

It belongs to the complex I subunit 3 family. In terms of assembly, core subunit of respiratory chain NADH dehydrogenase (Complex I) which is composed of 45 different subunits. Interacts with TMEM186. Interacts with TMEM242.

Its subcellular location is the mitochondrion inner membrane. The enzyme catalyses a ubiquinone + NADH + 5 H(+)(in) = a ubiquinol + NAD(+) + 4 H(+)(out). Functionally, core subunit of the mitochondrial membrane respiratory chain NADH dehydrogenase (Complex I) which catalyzes electron transfer from NADH through the respiratory chain, using ubiquinone as an electron acceptor. Essential for the catalytic activity of complex I. This chain is NADH-ubiquinone oxidoreductase chain 3, found in Canis lupus familiaris (Dog).